Here is a 222-residue protein sequence, read N- to C-terminus: Uridine diphosphate glucose pyrophosphatase NUDT14 (222 aa).

The Nudix hydrolase domain occupies 38-206; the sequence is KTHDSVTILM…DIPKTLGVIY (169 aa). Residues 111-129 carry the Nudix box motif; it reads PGLSLEEAACKEAWEECGY.

This sequence belongs to the Nudix hydrolase family. In terms of assembly, homodimer. Mg(2+) serves as cofactor.

The protein resides in the cytoplasm. The catalysed reaction is UDP-sugar + H2O = UMP + alpha-D-aldose 1-phosphate.. Its function is as follows. Hydrolyzes UDP-glucose to glucose 1-phosphate and UMP and ADP-ribose to ribose 5-phosphate and AMP. The physiological substrate is probably UDP-glucose. Poor activity on other substrates such as ADP-glucose, CDP-glucose, GDP-glucose and GDP-mannose. The polypeptide is Uridine diphosphate glucose pyrophosphatase NUDT14 (Nudt14) (Mus musculus (Mouse)).